A 431-amino-acid polypeptide reads, in one-letter code: Probable glucarate dehydratase (431 aa).

The substrate site is built by His-29, Thr-108, Tyr-153, and Lys-198. Lys-200 serves as the catalytic Proton acceptor. 2 residues coordinate Mg(2+): Asp-228 and Asn-276. Substrate-binding positions include 228–230 (DPN), Asn-276, 327–329 (HSN), His-356, and Arg-410. His-327 (proton acceptor) is an active-site residue.

Belongs to the mandelate racemase/muconate lactonizing enzyme family. GlucD subfamily. Mg(2+) serves as cofactor.

The enzyme catalyses D-glucarate = 5-dehydro-4-deoxy-D-glucarate + H2O. Its pathway is carbohydrate acid metabolism; D-glucarate degradation; 2,5-dioxopentanoate from D-glucarate: step 1/2. Functionally, catalyzes the dehydration of glucarate to 5-keto-4-deoxy-D-glucarate (5-kdGluc). This Streptomyces coelicolor (strain ATCC BAA-471 / A3(2) / M145) protein is Probable glucarate dehydratase (gudD).